The sequence spans 102 residues: NADH-quinone oxidoreductase subunit K (102 aa).

3 helical membrane-spanning segments follow: residues Leu5 to Leu25, Ile31 to Phe51, and Val62 to Leu82.

The protein belongs to the complex I subunit 4L family. As to quaternary structure, NDH-1 is composed of 14 different subunits. Subunits NuoA, H, J, K, L, M, N constitute the membrane sector of the complex.

It is found in the cell inner membrane. The catalysed reaction is a quinone + NADH + 5 H(+)(in) = a quinol + NAD(+) + 4 H(+)(out). NDH-1 shuttles electrons from NADH, via FMN and iron-sulfur (Fe-S) centers, to quinones in the respiratory chain. The immediate electron acceptor for the enzyme in this species is believed to be ubiquinone. Couples the redox reaction to proton translocation (for every two electrons transferred, four hydrogen ions are translocated across the cytoplasmic membrane), and thus conserves the redox energy in a proton gradient. The sequence is that of NADH-quinone oxidoreductase subunit K from Bordetella petrii (strain ATCC BAA-461 / DSM 12804 / CCUG 43448).